Reading from the N-terminus, the 432-residue chain is uncharacterized protein (432 aa).

SIS domains follow at residues 105–244 and 277–422; these read WLTE…DLVS and CDKK…VDLP.

This is an uncharacterized protein from Saccharomyces cerevisiae (strain Lalvin EC1118 / Prise de mousse) (Baker's yeast).